The following is a 288-amino-acid chain: ATP synthase gamma chain (288 aa).

Belongs to the ATPase gamma chain family. In terms of assembly, F-type ATPases have 2 components, CF(1) - the catalytic core - and CF(0) - the membrane proton channel. CF(1) has five subunits: alpha(3), beta(3), gamma(1), delta(1), epsilon(1). CF(0) has three main subunits: a, b and c.

It localises to the cell inner membrane. Produces ATP from ADP in the presence of a proton gradient across the membrane. The gamma chain is believed to be important in regulating ATPase activity and the flow of protons through the CF(0) complex. This chain is ATP synthase gamma chain, found in Acidithiobacillus ferrooxidans (strain ATCC 23270 / DSM 14882 / CIP 104768 / NCIMB 8455) (Ferrobacillus ferrooxidans (strain ATCC 23270)).